The sequence spans 209 residues: Urease accessory protein UreE (209 aa).

Over residues 170 to 196 (EHHGHSHSHSHDHDHDHDHDHDHDHQH) the composition is skewed to basic and acidic residues. The tract at residues 170–209 (EHHGHSHSHSHDHDHDHDHDHDHDHQHGPSCSHGHHHGHR) is disordered.

This sequence belongs to the UreE family.

It is found in the cytoplasm. Its function is as follows. Involved in urease metallocenter assembly. Binds nickel. Probably functions as a nickel donor during metallocenter assembly. The polypeptide is Urease accessory protein UreE (Burkholderia mallei (strain NCTC 10247)).